A 367-amino-acid polypeptide reads, in one-letter code: 7,8-didemethyl-8-hydroxy-5-deazariboflavin synthase (367 aa).

Positions 39–275 (LTFARNVFVP…AEVGVQVPPN (237 aa)) constitute a Radical SAM core domain. Residues Cys53, Cys57, and Cys60 each coordinate [4Fe-4S] cluster.

The protein belongs to the radical SAM superfamily. CofG family. Consists of two subunits, CofG and CofH. [4Fe-4S] cluster serves as cofactor.

It catalyses the reaction 5-amino-5-(4-hydroxybenzyl)-6-(D-ribitylimino)-5,6-dihydrouracil + S-adenosyl-L-methionine = 7,8-didemethyl-8-hydroxy-5-deazariboflavin + 5'-deoxyadenosine + L-methionine + NH4(+) + H(+). The protein operates within cofactor biosynthesis; coenzyme F0 biosynthesis. Its function is as follows. Catalyzes the radical-mediated synthesis of 7,8-didemethyl-8-hydroxy-5-deazariboflavin from 5-amino-5-(4-hydroxybenzyl)-6-(D-ribitylimino)-5,6-dihydrouracil. This Halobacterium salinarum (strain ATCC 29341 / DSM 671 / R1) protein is 7,8-didemethyl-8-hydroxy-5-deazariboflavin synthase.